The chain runs to 861 residues: DNA mismatch repair protein MutS (861 aa).

Position 614–621 (614–621) interacts with ATP; the sequence is GPNMGGKS.

It belongs to the DNA mismatch repair MutS family.

In terms of biological role, this protein is involved in the repair of mismatches in DNA. It is possible that it carries out the mismatch recognition step. This protein has a weak ATPase activity. The sequence is that of DNA mismatch repair protein MutS from Mannheimia succiniciproducens (strain KCTC 0769BP / MBEL55E).